The sequence spans 325 residues: Probable exonuclease subunit 1 (325 aa).

In terms of assembly, could consist of two subunits: D13 and D12.

Possible exonuclease involved in phage DNA recombination, replication, and repair. The chain is Probable exonuclease subunit 1 (D12) from Escherichia coli (Enterobacteria phage T5).